The chain runs to 884 residues: Alanine--tRNA ligase (884 aa).

Zn(2+) is bound by residues His-570, His-574, Cys-676, and His-680.

It belongs to the class-II aminoacyl-tRNA synthetase family. Zn(2+) is required as a cofactor.

Its subcellular location is the cytoplasm. The enzyme catalyses tRNA(Ala) + L-alanine + ATP = L-alanyl-tRNA(Ala) + AMP + diphosphate. In terms of biological role, catalyzes the attachment of alanine to tRNA(Ala) in a two-step reaction: alanine is first activated by ATP to form Ala-AMP and then transferred to the acceptor end of tRNA(Ala). Also edits incorrectly charged Ser-tRNA(Ala) and Gly-tRNA(Ala) via its editing domain. This Lawsonia intracellularis (strain PHE/MN1-00) protein is Alanine--tRNA ligase.